Reading from the N-terminus, the 418-residue chain is Tektin-1 (418 aa).

Coiled coils occupy residues Lys-21 to Leu-84, Leu-268 to Gly-308, and Arg-336 to Ile-383. A disordered region spans residues Pro-399–Cys-418.

Belongs to the tektin family. Microtubule inner protein component of sperm flagellar doublet microtubules. In terms of processing, ubiquitinated, leading to its degradation. Deubiquitinated by USP16, promoting its stability. Expressed in trachea multiciliated cells.

The protein localises to the cytoplasm. It is found in the cytoskeleton. It localises to the cilium axoneme. Its subcellular location is the flagellum axoneme. Functionally, microtubule inner protein (MIP) part of the dynein-decorated doublet microtubules (DMTs) in cilia and flagellar axoneme. Forms filamentous polymers in the walls of ciliary and flagellar microtubules. The sequence is that of Tektin-1 (TEKT1) from Bos taurus (Bovine).